A 588-amino-acid chain; its full sequence is MKSTQTPSGMPIHKYRPFHEQITVDLRDRTWPARRITEAPRWCAVDLRDGNQALIDPMSPERKRIMFNLLVRMGYKEIEVGFPSASQTDFDFVRSLIEEGAIPDDVTIQVLTQAREHLIARTYESIRGAKQAIVHLYNSTSVLQREVVFRTDRQGIIDIALEGARLCKRYEETIPETDVYYEYSPESYTGTELEFAAEICNRVVEVFDPTPERKVILNLPATVEMATPNVYADSIEWMCRHLDRRDEILVSLHPHNDRGTAVAAAELGYLAGADRIEGCLFGNGERTGNVDLVALGINLFTQGIDPQIDFSDLDGIKRTAEHCNQLAVPERSPWAGDLVYTAFSGSHQDAIKKGFEAMAVDAAAQGVTVDDIPWAVPYLPVDPQDLGRSYEAVIRVNSQSGKGGVAYLLKADHSLDLPRRLQIEFSGVVQAKTDAEGGEVTSAQIWSVFQDEYLPAPLDRVEEKWGRFELTSTRTSSDMGGSVSLDVVLRDGDEVREASASGNGPIAAFLQVLADQGVEVRLLDYVEHALSASGDALAASYVELEVEGVRLWGVGIDEDSSTASLEAIVSGVNRAIRRTVREPELAAV.

One can recognise a Pyruvate carboxyltransferase domain in the interval 40–314 (PRWCAVDLRD…DPQIDFSDLD (275 aa)). Mg(2+)-binding residues include Asp-49, His-253, His-255, and Asn-289. The tract at residues 456 to 588 (APLDRVEEKW…TVREPELAAV (133 aa)) is regulatory domain.

This sequence belongs to the alpha-IPM synthase/homocitrate synthase family. LeuA type 2 subfamily. In terms of assembly, homodimer. The cofactor is Mg(2+).

The protein localises to the cytoplasm. The catalysed reaction is 3-methyl-2-oxobutanoate + acetyl-CoA + H2O = (2S)-2-isopropylmalate + CoA + H(+). It functions in the pathway amino-acid biosynthesis; L-leucine biosynthesis; L-leucine from 3-methyl-2-oxobutanoate: step 1/4. In terms of biological role, catalyzes the condensation of the acetyl group of acetyl-CoA with 3-methyl-2-oxobutanoate (2-ketoisovalerate) to form 3-carboxy-3-hydroxy-4-methylpentanoate (2-isopropylmalate). This Clavibacter sepedonicus (Clavibacter michiganensis subsp. sepedonicus) protein is 2-isopropylmalate synthase.